The following is a 407-amino-acid chain: Transmembrane protein 184B (407 aa).

Residues 1 to 25 (MTVRGDVLAPDPASPTTAAASPSVS) are disordered. Residues 9–25 (APDPASPTTAAASPSVS) show a composition bias toward low complexity. Helical transmembrane passes span 40–60 (FLMT…ALLI), 84–104 (ILFI…FFTN), 121–141 (LVIY…SSIM), 178–198 (LQFC…QAFG), 214–234 (VTII…LFYF), 249–269 (FFMV…LAIL), and 290–310 (VAAG…ALAL). Positions 369 to 395 (TLEPGPTWRGGAHGLSRSHSLSGARDN) are disordered. Phosphoserine occurs at positions 388, 402, and 403.

This sequence belongs to the TMEM184 family.

The protein resides in the membrane. In terms of biological role, may activate the MAP kinase signaling pathway. The sequence is that of Transmembrane protein 184B (TMEM184B) from Homo sapiens (Human).